The chain runs to 127 residues: UPF0102 protein SYNAS_23220 (127 aa).

This sequence belongs to the UPF0102 family.

The protein is UPF0102 protein SYNAS_23220 of Syntrophus aciditrophicus (strain SB).